Consider the following 207-residue polypeptide: Fibroblast growth factor 18 (207 aa).

The signal sequence occupies residues 1 to 27 (MYSAPSACTCLCLHFLLLCFQVQVLAA). N39 carries an N-linked (GlcNAc...) asparagine glycan. C109 and C127 are oxidised to a cystine. N-linked (GlcNAc...) asparagine glycosylation is present at N137.

Belongs to the heparin-binding growth factors family. In terms of assembly, interacts with FGFR3 and FGFR4.

Its subcellular location is the secreted. Functionally, plays an important role in the regulation of cell proliferation, cell differentiation and cell migration. Required for normal ossification and bone development. Stimulates hepatic and intestinal proliferation. The protein is Fibroblast growth factor 18 (Fgf18) of Mus musculus (Mouse).